The chain runs to 270 residues: Indole-3-glycerol phosphate synthase (270 aa).

Belongs to the TrpC family.

It carries out the reaction 1-(2-carboxyphenylamino)-1-deoxy-D-ribulose 5-phosphate + H(+) = (1S,2R)-1-C-(indol-3-yl)glycerol 3-phosphate + CO2 + H2O. Its pathway is amino-acid biosynthesis; L-tryptophan biosynthesis; L-tryptophan from chorismate: step 4/5. This is Indole-3-glycerol phosphate synthase from Beutenbergia cavernae (strain ATCC BAA-8 / DSM 12333 / CCUG 43141 / JCM 11478 / NBRC 16432 / NCIMB 13614 / HKI 0122).